We begin with the raw amino-acid sequence, 223 residues long: NAD(P)H-hydrate epimerase (223 aa).

The 203-residue stretch at 9-211 (AIKLDEELMG…ELKDKLHLIL (203 aa)) folds into the YjeF N-terminal domain. 60 to 64 (NNGGD) contacts (6S)-NADPHX. Asn-61 and Asp-120 together coordinate K(+). (6S)-NADPHX is bound by residues 124–130 (GFSFKGP) and Asp-153. Residue Ser-156 participates in K(+) binding.

The protein belongs to the NnrE/AIBP family. K(+) is required as a cofactor.

It catalyses the reaction (6R)-NADHX = (6S)-NADHX. The catalysed reaction is (6R)-NADPHX = (6S)-NADPHX. Functionally, catalyzes the epimerization of the S- and R-forms of NAD(P)HX, a damaged form of NAD(P)H that is a result of enzymatic or heat-dependent hydration. This is a prerequisite for the S-specific NAD(P)H-hydrate dehydratase to allow the repair of both epimers of NAD(P)HX. This Entamoeba histolytica (strain ATCC 30459 / HM-1:IMSS / ABRM) protein is NAD(P)H-hydrate epimerase.